The primary structure comprises 82 residues: MSPLISAASVLAAGLAVGLASIGPGVGQGTAAGQALEGIARQPEAEGKIRGTLLLSFAFMESLTIYGLVVALALLFANPFVS.

Helical transmembrane passes span 3–23 (PLIS…ASIG) and 57–77 (FAFM…LLFA).

Belongs to the ATPase C chain family. F-type ATPases have 2 components, F(1) - the catalytic core - and F(0) - the membrane proton channel. F(1) has five subunits: alpha(3), beta(3), gamma(1), delta(1), epsilon(1). F(0) has four main subunits: a(1), b(1), b'(1) and c(10-14). The alpha and beta chains form an alternating ring which encloses part of the gamma chain. F(1) is attached to F(0) by a central stalk formed by the gamma and epsilon chains, while a peripheral stalk is formed by the delta, b and b' chains.

The protein localises to the plastid. It is found in the chloroplast thylakoid membrane. Functionally, f(1)F(0) ATP synthase produces ATP from ADP in the presence of a proton or sodium gradient. F-type ATPases consist of two structural domains, F(1) containing the extramembraneous catalytic core and F(0) containing the membrane proton channel, linked together by a central stalk and a peripheral stalk. During catalysis, ATP synthesis in the catalytic domain of F(1) is coupled via a rotary mechanism of the central stalk subunits to proton translocation. In terms of biological role, key component of the F(0) channel; it plays a direct role in translocation across the membrane. A homomeric c-ring of between 10-14 subunits forms the central stalk rotor element with the F(1) delta and epsilon subunits. The protein is ATP synthase subunit c, chloroplastic of Mesostigma viride (Green alga).